Here is a 530-residue protein sequence, read N- to C-terminus: Phosphoenolpyruvate carboxykinase (ATP) (530 aa).

Residues Arg60, Tyr195, and Lys201 each contribute to the substrate site. Residues Lys201, His221, and 237-245 (GLSGTGKTT) contribute to the ATP site. Residues Lys201 and His221 each contribute to the Mn(2+) site. A Mn(2+)-binding site is contributed by Asp258. Residues Glu286, Arg324, and Ser449 each contribute to the ATP site. A substrate-binding site is contributed by Arg324.

The protein belongs to the phosphoenolpyruvate carboxykinase (ATP) family. The cofactor is Mn(2+).

It localises to the cytoplasm. It catalyses the reaction oxaloacetate + ATP = phosphoenolpyruvate + ADP + CO2. It functions in the pathway carbohydrate biosynthesis; gluconeogenesis. In terms of biological role, involved in the gluconeogenesis. Catalyzes the conversion of oxaloacetate (OAA) to phosphoenolpyruvate (PEP) through direct phosphoryl transfer between the nucleoside triphosphate and OAA. The polypeptide is Phosphoenolpyruvate carboxykinase (ATP) (Geotalea uraniireducens (strain Rf4) (Geobacter uraniireducens)).